A 358-amino-acid chain; its full sequence is GDSL esterase/lipase EXL5 (358 aa).

A signal peptide spans Met-1–Ala-21. The N-linked (GlcNAc...) asparagine glycan is linked to Asn-24. The active-site Nucleophile is Ser-36. Residues Asp-333 and His-336 contribute to the active site.

This sequence belongs to the 'GDSL' lipolytic enzyme family. Flower buds.

It is found in the secreted. This chain is GDSL esterase/lipase EXL5 (EXL5), found in Arabidopsis thaliana (Mouse-ear cress).